We begin with the raw amino-acid sequence, 206 residues long: CASP-like protein 1F1 (206 aa).

The Cytoplasmic portion of the chain corresponds to 1-43 (MCFQFSILYTCYLAHFGVFPRKYLVMAGIEAKFQQNPPLGTHK). Residues 44-64 (LFLGAHICLRILTVTATLTAA) form a helical membrane-spanning segment. Topologically, residues 65-92 (WMMITSKQTVEVYGIQVEAKYSYSSAFK) are extracellular. The chain crosses the membrane as a helical span at residues 93 to 113 (FFSYANAIACGCSVLTLFPAF). Topologically, residues 114–124 (SLFYRGSTPMK) are cytoplasmic. The helical transmembrane segment at 125–145 (FFFLFLHDLCMMSLVLAGCAA) threads the bilayer. Residues 146-177 (ATAIGYVGRYGNNHAGWMAICDQFDEYCNRIR) lie on the Extracellular side of the membrane. Residues 178 to 198 (LSLMFSYLAFVFILMLTIMSA) traverse the membrane as a helical segment. Over 199 to 206 (NKSREIRV) the chain is Cytoplasmic.

Belongs to the Casparian strip membrane proteins (CASP) family. As to quaternary structure, homodimer and heterodimers.

It localises to the cell membrane. The chain is CASP-like protein 1F1 from Vitis vinifera (Grape).